Here is a 196-residue protein sequence, read N- to C-terminus: Anthranilate synthase component 2 (196 aa).

One can recognise a Glutamine amidotransferase type-1 domain in the interval 1–195 (MLLLIDNYDS…LNTTRRLETA (195 aa)). 52–54 (GPC) lines the L-glutamine pocket. Catalysis depends on Cys80, which acts as the Nucleophile; for GATase activity. L-glutamine-binding positions include Gln84 and 130 to 131 (SL). Active-site for GATase activity residues include His169 and Glu171.

In terms of assembly, heterotetramer consisting of two non-identical subunits: a beta subunit (TrpG) and a large alpha subunit (TrpE).

It catalyses the reaction chorismate + L-glutamine = anthranilate + pyruvate + L-glutamate + H(+). It functions in the pathway amino-acid biosynthesis; L-tryptophan biosynthesis; L-tryptophan from chorismate: step 1/5. In terms of biological role, part of a heterotetrameric complex that catalyzes the two-step biosynthesis of anthranilate, an intermediate in the biosynthesis of L-tryptophan. In the first step, the glutamine-binding beta subunit (TrpG) of anthranilate synthase (AS) provides the glutamine amidotransferase activity which generates ammonia as a substrate that, along with chorismate, is used in the second step, catalyzed by the large alpha subunit of AS (TrpE) to produce anthranilate. In the absence of TrpG, TrpE can synthesize anthranilate directly from chorismate and high concentrations of ammonia. Participates in the tryptophan-dependent indole-3-acetic acid production, which is a phytohormone released by A.brasilense. In Azospirillum brasilense, this protein is Anthranilate synthase component 2 (trpG).